Here is a 51-residue protein sequence, read N- to C-terminus: Small ribosomal subunit protein eS31 (51 aa).

C21, C24, C39, and C42 together coordinate Zn(2+). The segment at 21–42 (CVRCSNGVFMADHGDRYACGKC) adopts a C4-type zinc-finger fold.

The protein belongs to the eukaryotic ribosomal protein eS31 family. In terms of assembly, part of the 30S ribosomal subunit. It depends on Zn(2+) as a cofactor.

This is Small ribosomal subunit protein eS31 from Methanothermobacter thermautotrophicus (strain ATCC 29096 / DSM 1053 / JCM 10044 / NBRC 100330 / Delta H) (Methanobacterium thermoautotrophicum).